A 248-amino-acid chain; its full sequence is Ras-related protein RSR1 (248 aa).

10-17 is a binding site for GTP; the sequence is GAGGVGKS. An Effector region motif is present at residues 32–40; it reads YDPTIEDSY. GTP-binding positions include 57–61 and 116–119; these read DTAGV and NKCD. The interval 182–248 is disordered; it reads LQKQQQQQQQ…SSGSKFCTII (67 aa). The span at 184–214 shows a compositional bias: low complexity; it reads KQQQQQQQEQDAEGQQQQQKSGKSKSSATQK. 2 stretches are compositionally biased toward polar residues: residues 219–231 and 238–248; these read DGQT…LKQS and SSSGSKFCTII. At cysteine 245 the chain carries Cysteine methyl ester. Cysteine 245 carries the S-geranylgeranyl cysteine lipid modification. The propeptide at 246 to 248 is removed in mature form; it reads TII.

This sequence belongs to the small GTPase superfamily. Ras family.

Its subcellular location is the cell membrane. It carries out the reaction GTP + H2O = GDP + phosphate + H(+). With respect to regulation, alternates between an inactive form bound to GDP and an active form bound to GTP. Activated by a guanine nucleotide-exchange factor (GEF) and inactivated by a GTPase-activating protein (GAP). Ras-related protein which binds GDP/GTP and possesses intrinsic GTPase activity. Involved in both yeast and hypha development. In the yeast phase, it is required for normal (polar) bud site selection and is involved in cell morphogenesis; in the yeast-mycelial transition it is involved in germ tube emergence; and in the development of the hyphae it is involved in cell elongation. The sequence is that of Ras-related protein RSR1 (RSR1) from Candida albicans (Yeast).